The primary structure comprises 240 residues: uncharacterized protein (240 aa).

The signal sequence occupies residues 1–18 (MTRYTYLFILQIISCSFA). Residue N127 is glycosylated (N-linked (GlcNAc...) asparagine). A helical transmembrane segment spans residues 215 to 235 (GFISSSQLPQFVYLIVFTIIG).

Its subcellular location is the membrane. This is an uncharacterized protein from Caenorhabditis elegans.